We begin with the raw amino-acid sequence, 247 residues long: PF03932 family protein CutC (247 aa).

This sequence belongs to the CutC family.

The protein localises to the cytoplasm. The chain is PF03932 family protein CutC from Aliivibrio fischeri (strain MJ11) (Vibrio fischeri).